A 619-amino-acid polypeptide reads, in one-letter code: TOX high mobility group box family member 4 (619 aa).

Disordered stretches follow at residues 155–227 (LSLG…QKPV) and 306–335 (DPVP…TESP). Position 176 is a phosphothreonine (Thr-176). 2 positions are modified to phosphoserine: Ser-178 and Ser-182. The span at 183–193 (LHEDGVDDFRR) shows a compositional bias: basic and acidic residues. A compositionally biased stretch (basic residues) spans 208 to 218 (KQKAPKKRKKK). The Nuclear localization signal signature appears at 213–218 (KKRKKK). Residues 223-291 (PQKPVSAYAL…EYLKALAAYK (69 aa)) constitute a DNA-binding region (HMG box). Residue Thr-313 is modified to Phosphothreonine. The residue at position 315 (Ser-315) is a Phosphoserine. Over residues 320-335 (TAADPASPAPASTESP) the composition is skewed to low complexity. Position 479 is an asymmetric dimethylarginine (Arg-479). 6 positions are modified to phosphoserine: Ser-531, Ser-548, Ser-550, Ser-558, Ser-560, and Ser-565.

In terms of assembly, component of the PNUTS-PP1 phosphatase complex, composed of PPP1R10/PNUTS, TOX4, WDR82 and PPP1CA or PPP1CB or PPP1CC. Interacts with PPP1R10/PNUTS. Interacts with FOXO1 and CREB1 (increased by cAMP); FOXO1 and CREB1 are required for full induction of TOX4-dependent activity and the interactions are inhibited by insulin.

It is found in the nucleus. The protein localises to the chromosome. With respect to regulation, in liver, recruited to target gene promoters following treatment with dexamethasone and cAMP. Binding is decreased in presence of insulin. Functionally, transcription factor that modulates cell fate reprogramming from the somatic state to the pluripotent and neuronal fate. In liver, controls the expression of hormone-regulated gluconeogenic genes such as G6PC1 and PCK1. This regulation is independent of the insulin receptor activation. Also acts as a regulatory component of protein phosphatase 1 (PP1) complexes. Component of the PNUTS-PP1 protein phosphatase complex, a PP1 complex that regulates RNA polymerase II transcription pause-release. PNUTS-PP1 also plays a role in the control of chromatin structure and cell cycle progression during the transition from mitosis into interphase. This chain is TOX high mobility group box family member 4, found in Mus musculus (Mouse).